The chain runs to 125 residues: Putative iron-sulfur cluster insertion protein ErpA 2 (125 aa).

Cysteine 53, cysteine 117, and cysteine 119 together coordinate iron-sulfur cluster.

This sequence belongs to the HesB/IscA family. As to quaternary structure, homodimer. It depends on iron-sulfur cluster as a cofactor.

Functionally, required for insertion of 4Fe-4S clusters. The protein is Putative iron-sulfur cluster insertion protein ErpA 2 of Polaromonas naphthalenivorans (strain CJ2).